A 300-amino-acid polypeptide reads, in one-letter code: MQSILSQSPGSRFSQYMALTKPRVTQLAVFCAVIGMFLATPGMVPWRVLIGGTVGIWLLAGAAFAINCLVEQKIDAMMRRTAWRPSARGEITTPQILLFSAVLGSIGAWTLYTFTNPLTMWLTIATFVGYAVIYTLLLKPMTPQNIVIGGASGAMPPALGWAAVTGAVPGDAWILVLIIFVWTPPHFWVLALYRRKDYENAGLPMLPVTHGEQYTRLHILLYTVILFAVTLMPFISGMSGAVYLTSAVLLGAVFLAYAWKIYRDYSDALARKAFRYSIVYLSLLFAALLVDHYARPLLGV.

Transmembrane regions (helical) follow at residues 24–44 (VTQL…PGMV), 48–68 (VLIG…AINC), 94–114 (PQIL…LYTF), 118–138 (LTMW…TLLL), 146–166 (IVIG…AVTG), 172–192 (AWIL…VLAL), 217–237 (LHIL…FISG), 239–259 (SGAV…AYAW), and 278–298 (IVYL…RPLL).

This sequence belongs to the UbiA prenyltransferase family. Protoheme IX farnesyltransferase subfamily.

Its subcellular location is the cell inner membrane. It carries out the reaction heme b + (2E,6E)-farnesyl diphosphate + H2O = Fe(II)-heme o + diphosphate. It functions in the pathway porphyrin-containing compound metabolism; heme O biosynthesis; heme O from protoheme: step 1/1. In terms of biological role, converts heme B (protoheme IX) to heme O by substitution of the vinyl group on carbon 2 of heme B porphyrin ring with a hydroxyethyl farnesyl side group. The protein is Protoheme IX farnesyltransferase of Burkholderia vietnamiensis (strain G4 / LMG 22486) (Burkholderia cepacia (strain R1808)).